A 505-amino-acid chain; its full sequence is NADH-quinone oxidoreductase subunit N (505 aa).

Helical transmembrane passes span 20–40 (ALAP…GDLF), 59–79 (ALAL…GGVF), 83–103 (GLAA…ALMS), 115–135 (GEYY…VSAG), 137–157 (AIVL…LVAL), 172–192 (FLMG…LYGL), 220–240 (AVVA…TVPF), 251–271 (APTT…FAVL), 285–305 (LWSD…NIAA), 314–334 (MLAY…AACT), 342–362 (AAYL…IIYL), 394–414 (LAAV…TAGF), 431–451 (ITVV…LGVA), and 481–501 (AVCL…LFWI).

It belongs to the complex I subunit 2 family. As to quaternary structure, NDH-1 is composed of 14 different subunits. Subunits NuoA, H, J, K, L, M, N constitute the membrane sector of the complex.

Its subcellular location is the cell inner membrane. The enzyme catalyses a quinone + NADH + 5 H(+)(in) = a quinol + NAD(+) + 4 H(+)(out). Its function is as follows. NDH-1 shuttles electrons from NADH, via FMN and iron-sulfur (Fe-S) centers, to quinones in the respiratory chain. The immediate electron acceptor for the enzyme in this species is believed to be ubiquinone. Couples the redox reaction to proton translocation (for every two electrons transferred, four hydrogen ions are translocated across the cytoplasmic membrane), and thus conserves the redox energy in a proton gradient. The protein is NADH-quinone oxidoreductase subunit N of Desulfovibrio desulfuricans (strain ATCC 27774 / DSM 6949 / MB).